The following is a 173-amino-acid chain: ATP synthase subunit b (173 aa).

A helical transmembrane segment spans residues 12–34 (AFGNLYAIGWSAVNFLVLLALMY).

Belongs to the ATPase B chain family. F-type ATPases have 2 components, F(1) - the catalytic core - and F(0) - the membrane proton channel. F(1) has five subunits: alpha(3), beta(3), gamma(1), delta(1), epsilon(1). F(0) has three main subunits: a(1), b(2) and c(10-14). The alpha and beta chains form an alternating ring which encloses part of the gamma chain. F(1) is attached to F(0) by a central stalk formed by the gamma and epsilon chains, while a peripheral stalk is formed by the delta and b chains.

It is found in the cell membrane. Functionally, f(1)F(0) ATP synthase produces ATP from ADP in the presence of a proton or sodium gradient. F-type ATPases consist of two structural domains, F(1) containing the extramembraneous catalytic core and F(0) containing the membrane proton channel, linked together by a central stalk and a peripheral stalk. During catalysis, ATP synthesis in the catalytic domain of F(1) is coupled via a rotary mechanism of the central stalk subunits to proton translocation. Component of the F(0) channel, it forms part of the peripheral stalk, linking F(1) to F(0). In Syntrophomonas wolfei subsp. wolfei (strain DSM 2245B / Goettingen), this protein is ATP synthase subunit b.